The chain runs to 192 residues: Flavin prenyltransferase UbiX (192 aa).

FMN contacts are provided by residues Gly10–Ser12, Ser36, Ser92–Thr95, and Arg127. Tyr157 and Lys173 together coordinate dimethylallyl phosphate.

The protein belongs to the UbiX/PAD1 family.

The enzyme catalyses dimethylallyl phosphate + FMNH2 = prenylated FMNH2 + phosphate. Its function is as follows. Flavin prenyltransferase that catalyzes the synthesis of the prenylated FMN cofactor (prenyl-FMN) for 4-hydroxy-3-polyprenylbenzoic acid decarboxylase UbiD. The prenyltransferase is metal-independent and links a dimethylallyl moiety from dimethylallyl monophosphate (DMAP) to the flavin N5 and C6 atoms of FMN. This chain is Flavin prenyltransferase UbiX, found in Chlamydia muridarum (strain MoPn / Nigg).